Consider the following 157-residue polypeptide: Crossover junction endodeoxyribonuclease RuvC (157 aa).

Residues Asp7, Glu67, and Asp140 contribute to the active site. Mg(2+) contacts are provided by Asp7, Glu67, and Asp140.

It belongs to the RuvC family. As to quaternary structure, homodimer which binds Holliday junction (HJ) DNA. The HJ becomes 2-fold symmetrical on binding to RuvC with unstacked arms; it has a different conformation from HJ DNA in complex with RuvA. In the full resolvosome a probable DNA-RuvA(4)-RuvB(12)-RuvC(2) complex forms which resolves the HJ. The cofactor is Mg(2+).

Its subcellular location is the cytoplasm. It catalyses the reaction Endonucleolytic cleavage at a junction such as a reciprocal single-stranded crossover between two homologous DNA duplexes (Holliday junction).. The RuvA-RuvB-RuvC complex processes Holliday junction (HJ) DNA during genetic recombination and DNA repair. Endonuclease that resolves HJ intermediates. Cleaves cruciform DNA by making single-stranded nicks across the HJ at symmetrical positions within the homologous arms, yielding a 5'-phosphate and a 3'-hydroxyl group; requires a central core of homology in the junction. The consensus cleavage sequence is 5'-(A/T)TT(C/G)-3'. Cleavage occurs on the 3'-side of the TT dinucleotide at the point of strand exchange. HJ branch migration catalyzed by RuvA-RuvB allows RuvC to scan DNA until it finds its consensus sequence, where it cleaves and resolves the cruciform DNA. In Thermosipho melanesiensis (strain DSM 12029 / CIP 104789 / BI429), this protein is Crossover junction endodeoxyribonuclease RuvC.